The following is a 335-amino-acid chain: Zinc-type alcohol dehydrogenase-like protein SAV2186 (335 aa).

Belongs to the zinc-containing alcohol dehydrogenase family. Quinone oxidoreductase subfamily.

The polypeptide is Zinc-type alcohol dehydrogenase-like protein SAV2186 (Staphylococcus aureus (strain Mu50 / ATCC 700699)).